We begin with the raw amino-acid sequence, 168 residues long: Photosystem I assembly protein Ycf3 (168 aa).

TPR repeat units follow at residues 35–68 (AFTYYRDGMSAQSEGNYAEALQNYYEATRPEIDP), 72–105 (SYILYNIGLIHTSNGEHTKALEYYFRALERNPFL), and 120–153 (GEQAIRQGDSEIAEAWSDQAAEYWKQAIALTPGN).

Belongs to the Ycf3 family.

It is found in the plastid. Its subcellular location is the chloroplast thylakoid membrane. Its function is as follows. Essential for the assembly of the photosystem I (PSI) complex. May act as a chaperone-like factor to guide the assembly of the PSI subunits. This is Photosystem I assembly protein Ycf3 from Acorus calamus var. americanus (American sweet flag).